Here is a 190-residue protein sequence, read N- to C-terminus: Crossover junction endodeoxyribonuclease RuvC (190 aa).

Active-site residues include Asp-8, Glu-67, and Asp-139. Residues Asp-8, Glu-67, and Asp-139 each contribute to the Mg(2+) site.

The protein belongs to the RuvC family. In terms of assembly, homodimer which binds Holliday junction (HJ) DNA. The HJ becomes 2-fold symmetrical on binding to RuvC with unstacked arms; it has a different conformation from HJ DNA in complex with RuvA. In the full resolvosome a probable DNA-RuvA(4)-RuvB(12)-RuvC(2) complex forms which resolves the HJ. The cofactor is Mg(2+).

It localises to the cytoplasm. It catalyses the reaction Endonucleolytic cleavage at a junction such as a reciprocal single-stranded crossover between two homologous DNA duplexes (Holliday junction).. The RuvA-RuvB-RuvC complex processes Holliday junction (HJ) DNA during genetic recombination and DNA repair. Endonuclease that resolves HJ intermediates. Cleaves cruciform DNA by making single-stranded nicks across the HJ at symmetrical positions within the homologous arms, yielding a 5'-phosphate and a 3'-hydroxyl group; requires a central core of homology in the junction. The consensus cleavage sequence is 5'-(A/T)TT(C/G)-3'. Cleavage occurs on the 3'-side of the TT dinucleotide at the point of strand exchange. HJ branch migration catalyzed by RuvA-RuvB allows RuvC to scan DNA until it finds its consensus sequence, where it cleaves and resolves the cruciform DNA. The polypeptide is Crossover junction endodeoxyribonuclease RuvC (Haemophilus influenzae (strain PittEE)).